Here is a 119-residue protein sequence, read N- to C-terminus: Hydrogenase maturation factor HypA (119 aa).

His2 lines the Ni(2+) pocket. Zn(2+) contacts are provided by Cys73, Cys76, Cys89, and Cys92.

Belongs to the HypA/HybF family.

Functionally, involved in the maturation of [NiFe] hydrogenases. Required for nickel insertion into the metal center of the hydrogenase. This is Hydrogenase maturation factor HypA from Dehalococcoides mccartyi (strain CBDB1).